A 205-amino-acid chain; its full sequence is Anaerobic dimethyl sulfoxide reductase chain B (205 aa).

4Fe-4S ferredoxin-type domains follow at residues 4-32 (YGFY…LGTE), 57-89 (NIFA…KNAD), and 90-119 (GFVI…YDAQ). [4Fe-4S] cluster contacts are provided by cysteine 13, cysteine 16, cysteine 19, cysteine 23, cysteine 67, cysteine 70, cysteine 75, cysteine 79, cysteine 99, cysteine 102, cysteine 105, cysteine 109, cysteine 126, cysteine 129, cysteine 141, and cysteine 145.

Heterotrimeric enzyme composed of a catalytic heterodimer (DmsAB) and a membrane anchor protein (DmsC). It depends on [4Fe-4S] cluster as a cofactor.

Electron transfer subunit of the terminal reductase during anaerobic growth on various sulfoxide and N-oxide compounds. The sequence is that of Anaerobic dimethyl sulfoxide reductase chain B (dmsB) from Haemophilus influenzae (strain ATCC 51907 / DSM 11121 / KW20 / Rd).